A 525-amino-acid chain; its full sequence is Arylsulfatase G (525 aa).

A signal peptide spans 1–16; that stretch reads MGWLFLKVLLAGVSFS. Ca(2+) is bound by residues Asp44, Asp45, and Cys84. Cys84 serves as the catalytic Nucleophile. The residue at position 84 (Cys84) is a 3-oxoalanine (Cys). The N-linked (GlcNAc...) asparagine glycan is linked to Asn117. Lys137 contributes to the substrate binding site. The active site involves His139. Position 162 (Ser162) interacts with substrate. Asn215 carries N-linked (GlcNAc...) asparagine glycosylation. Substrate is bound at residue His251. Residues Asp302 and Asn303 each contribute to the Ca(2+) site. N-linked (GlcNAc...) asparagine glycosylation is found at Asn356 and Asn497.

This sequence belongs to the sulfatase family. The cofactor is Ca(2+). In terms of processing, N-glycosylated. N-glycosylated with both high mannose and complex type sugars. The conversion to 3-oxoalanine (also known as C-formylglycine, FGly), of a serine or cysteine residue in prokaryotes and of a cysteine residue in eukaryotes, is critical for catalytic activity. Post-translationally, the 63-kDa precursor undergoes proteolytic processing in two steps, yielding two fragments in the first step (apparent molecular masses of 44 and 18 kDa). In the second step, the 44-kDa fragment is processed further to the 34- and 10-kDa chains. The 10-kDa chain is a cleavage product of the 44-kDa fragment but linked to the 18-kDa chain through a disulfide bridge. Widely expressed, with very low expression in brain, lung, heart and skeletal muscle.

Its subcellular location is the lysosome. It catalyses the reaction an aryl sulfate + H2O = a phenol + sulfate + H(+). It carries out the reaction Hydrolysis of the 3-sulfate groups of the N-sulfo-D-glucosamine 3-O-sulfate units of heparin.. With respect to regulation, inhibited by phosphate. The phosphate forms a covalent bond with the active site 3-oxoalanine. Its function is as follows. Displays arylsulfatase activity at acidic pH towards artificial substrates, such as p-nitrocatechol sulfate and also, but with a lower activity towards p-nitrophenyl sulfate and 4-methylumbelliferyl sulfate. Catalyzes the hydrolysis of the 3-sulfate groups of the N-sulfo-D-glucosamine 3-O-sulfate units of heparin. This chain is Arylsulfatase G (ARSG), found in Homo sapiens (Human).